The chain runs to 337 residues: tRNA dimethylallyltransferase (337 aa).

24–31 (GPTGAGKT) provides a ligand contact to ATP. 26-31 (TGAGKT) provides a ligand contact to substrate. Interaction with substrate tRNA regions lie at residues 49 to 52 (DSRQ) and 188 to 192 (QRAVR).

It belongs to the IPP transferase family. Monomer. Requires Mg(2+) as cofactor.

It catalyses the reaction adenosine(37) in tRNA + dimethylallyl diphosphate = N(6)-dimethylallyladenosine(37) in tRNA + diphosphate. Its function is as follows. Catalyzes the transfer of a dimethylallyl group onto the adenine at position 37 in tRNAs that read codons beginning with uridine, leading to the formation of N6-(dimethylallyl)adenosine (i(6)A). This chain is tRNA dimethylallyltransferase, found in Nitratidesulfovibrio vulgaris (strain DSM 19637 / Miyazaki F) (Desulfovibrio vulgaris).